The primary structure comprises 203 residues: ATP-dependent Clp protease proteolytic subunit (203 aa).

Ser107 serves as the catalytic Nucleophile. His132 is a catalytic residue.

It belongs to the peptidase S14 family. In terms of assembly, fourteen ClpP subunits assemble into 2 heptameric rings which stack back to back to give a disk-like structure with a central cavity, resembling the structure of eukaryotic proteasomes.

It is found in the cytoplasm. The enzyme catalyses Hydrolysis of proteins to small peptides in the presence of ATP and magnesium. alpha-casein is the usual test substrate. In the absence of ATP, only oligopeptides shorter than five residues are hydrolyzed (such as succinyl-Leu-Tyr-|-NHMec, and Leu-Tyr-Leu-|-Tyr-Trp, in which cleavage of the -Tyr-|-Leu- and -Tyr-|-Trp bonds also occurs).. Functionally, cleaves peptides in various proteins in a process that requires ATP hydrolysis. Has a chymotrypsin-like activity. Plays a major role in the degradation of misfolded proteins. This is ATP-dependent Clp protease proteolytic subunit from Shewanella pealeana (strain ATCC 700345 / ANG-SQ1).